The sequence spans 498 residues: ATP synthase subunit beta, chloroplastic (498 aa).

Residue 172–179 (GGAGVGKT) participates in ATP binding.

This sequence belongs to the ATPase alpha/beta chains family. In terms of assembly, F-type ATPases have 2 components, CF(1) - the catalytic core - and CF(0) - the membrane proton channel. CF(1) has five subunits: alpha(3), beta(3), gamma(1), delta(1), epsilon(1). CF(0) has four main subunits: a(1), b(1), b'(1) and c(9-12).

It localises to the plastid. Its subcellular location is the chloroplast thylakoid membrane. It carries out the reaction ATP + H2O + 4 H(+)(in) = ADP + phosphate + 5 H(+)(out). In terms of biological role, produces ATP from ADP in the presence of a proton gradient across the membrane. The catalytic sites are hosted primarily by the beta subunits. The protein is ATP synthase subunit beta, chloroplastic of Solanum tuberosum (Potato).